The sequence spans 620 residues: Chaperone protein HscA homolog (620 aa).

Belongs to the heat shock protein 70 family.

Its function is as follows. Chaperone involved in the maturation of iron-sulfur cluster-containing proteins. Has a low intrinsic ATPase activity which is markedly stimulated by HscB. The sequence is that of Chaperone protein HscA homolog from Shewanella baltica (strain OS155 / ATCC BAA-1091).